Here is a 311-residue protein sequence, read N- to C-terminus: 4-diphosphocytidyl-2-C-methyl-D-erythritol kinase (311 aa).

Residue lysine 11 is part of the active site. Position 94–104 (94–104 (PVAAGLAGGSA)) interacts with ATP. The active site involves aspartate 136.

The protein belongs to the GHMP kinase family. IspE subfamily.

The enzyme catalyses 4-CDP-2-C-methyl-D-erythritol + ATP = 4-CDP-2-C-methyl-D-erythritol 2-phosphate + ADP + H(+). It functions in the pathway isoprenoid biosynthesis; isopentenyl diphosphate biosynthesis via DXP pathway; isopentenyl diphosphate from 1-deoxy-D-xylulose 5-phosphate: step 3/6. Its function is as follows. Catalyzes the phosphorylation of the position 2 hydroxy group of 4-diphosphocytidyl-2C-methyl-D-erythritol. This is 4-diphosphocytidyl-2-C-methyl-D-erythritol kinase from Synechococcus sp. (strain JA-2-3B'a(2-13)) (Cyanobacteria bacterium Yellowstone B-Prime).